The following is a 459-amino-acid chain: ATP-dependent protease ATPase subunit HslU (459 aa).

Residues Val-26, 68 to 73, Asp-271, Glu-337, and Arg-409 contribute to the ATP site; that span reads GVGKTE.

Belongs to the ClpX chaperone family. HslU subfamily. A double ring-shaped homohexamer of HslV is capped on each side by a ring-shaped HslU homohexamer. The assembly of the HslU/HslV complex is dependent on binding of ATP.

The protein localises to the cytoplasm. ATPase subunit of a proteasome-like degradation complex; this subunit has chaperone activity. The binding of ATP and its subsequent hydrolysis by HslU are essential for unfolding of protein substrates subsequently hydrolyzed by HslV. HslU recognizes the N-terminal part of its protein substrates and unfolds these before they are guided to HslV for hydrolysis. The protein is ATP-dependent protease ATPase subunit HslU of Xylella fastidiosa (strain M12).